The sequence spans 478 residues: Glycogen synthase (478 aa).

Lys-15 lines the ADP-alpha-D-glucose pocket.

Belongs to the glycosyltransferase 1 family. Bacterial/plant glycogen synthase subfamily.

The catalysed reaction is [(1-&gt;4)-alpha-D-glucosyl](n) + ADP-alpha-D-glucose = [(1-&gt;4)-alpha-D-glucosyl](n+1) + ADP + H(+). The protein operates within glycan biosynthesis; glycogen biosynthesis. Synthesizes alpha-1,4-glucan chains using ADP-glucose. This chain is Glycogen synthase, found in Caldicellulosiruptor bescii (strain ATCC BAA-1888 / DSM 6725 / KCTC 15123 / Z-1320) (Anaerocellum thermophilum).